Here is a 507-residue protein sequence, read N- to C-terminus: ATP synthase subunit alpha (507 aa).

169 to 176 (GDRQTGKT) is a binding site for ATP.

This sequence belongs to the ATPase alpha/beta chains family. As to quaternary structure, F-type ATPases have 2 components, CF(1) - the catalytic core - and CF(0) - the membrane proton channel. CF(1) has five subunits: alpha(3), beta(3), gamma(1), delta(1), epsilon(1). CF(0) has three main subunits: a(1), b(2) and c(9-12). The alpha and beta chains form an alternating ring which encloses part of the gamma chain. CF(1) is attached to CF(0) by a central stalk formed by the gamma and epsilon chains, while a peripheral stalk is formed by the delta and b chains.

The protein resides in the cell membrane. It catalyses the reaction ATP + H2O + 4 H(+)(in) = ADP + phosphate + 5 H(+)(out). In terms of biological role, produces ATP from ADP in the presence of a proton gradient across the membrane. The alpha chain is a regulatory subunit. This is ATP synthase subunit alpha from Desulforudis audaxviator (strain MP104C).